Here is a 57-residue protein sequence, read N- to C-terminus: Large ribosomal subunit protein eL20 (57 aa).

The segment covering 1–10 (MSEFTVTGTF) has biased composition (polar residues). The segment at 1–21 (MSEFTVTGTFESRDGNQPFEK) is disordered.

This sequence belongs to the eukaryotic ribosomal protein eL20 family. In terms of assembly, part of the 50S ribosomal subunit. Binds 23S rRNA.

The chain is Large ribosomal subunit protein eL20 from Halomicrobium mukohataei (strain ATCC 700874 / DSM 12286 / JCM 9738 / NCIMB 13541) (Haloarcula mukohataei).